Consider the following 604-residue polypeptide: Elongation factor 4 (604 aa).

Residues 7–189 (SKIRNFCIIA…SIVHLVPPPS (183 aa)) enclose the tr-type G domain. Residues 19–24 (DHGKST) and 136–139 (NKID) contribute to the GTP site.

It belongs to the TRAFAC class translation factor GTPase superfamily. Classic translation factor GTPase family. LepA subfamily.

It is found in the cell inner membrane. The enzyme catalyses GTP + H2O = GDP + phosphate + H(+). In terms of biological role, required for accurate and efficient protein synthesis under certain stress conditions. May act as a fidelity factor of the translation reaction, by catalyzing a one-codon backward translocation of tRNAs on improperly translocated ribosomes. Back-translocation proceeds from a post-translocation (POST) complex to a pre-translocation (PRE) complex, thus giving elongation factor G a second chance to translocate the tRNAs correctly. Binds to ribosomes in a GTP-dependent manner. The polypeptide is Elongation factor 4 (Synechococcus sp. (strain ATCC 27144 / PCC 6301 / SAUG 1402/1) (Anacystis nidulans)).